Consider the following 422-residue polypeptide: O-mycaminosyltylonolide 6-deoxyallosyltransferase (422 aa).

It belongs to the glycosyltransferase 28 family.

It carries out the reaction 5-O-beta-D-mycaminosyltylonolide + dTDP-6-deoxy-alpha-D-allose = demethyllactenocin + dTDP + H(+). Its function is as follows. Involved in the biosynthesis of the macrolide antibiotic tylosin derived from the polyketide lactone tylactone. Catalyzes the transfer of 6-deoxy-alpha-D-allose from dTDP-6-deoxy-alpha-D-allose to O-mycaminosyltylonolide (OMT) to yield demethyllactenocin. The protein is O-mycaminosyltylonolide 6-deoxyallosyltransferase of Streptomyces fradiae (Streptomyces roseoflavus).